A 152-amino-acid chain; its full sequence is Arginine repressor (152 aa).

The protein belongs to the ArgR family.

Its subcellular location is the cytoplasm. It participates in amino-acid biosynthesis; L-arginine biosynthesis [regulation]. Functionally, regulates arginine biosynthesis genes. In Caldicellulosiruptor saccharolyticus (strain ATCC 43494 / DSM 8903 / Tp8T 6331), this protein is Arginine repressor.